The sequence spans 385 residues: Glucans biosynthesis protein C (385 aa).

A run of 10 helical transmembrane segments spans residues 17–37, 60–80, 91–111, 137–157, 173–193, 212–232, 239–259, 274–294, 311–331, and 338–358; these read AWLM…SHTW, MQVF…RYPL, VGIP…IMLQ, ISHL…VWIF, KFSM…YAVI, FIVM…LAFI, LFTT…VAYL, TESV…FSFG, ASLF…AYIT, and WLGF…LYEI.

Belongs to the acyltransferase 3 family. OpgC subfamily.

Its subcellular location is the cell membrane. It participates in glycan metabolism; osmoregulated periplasmic glucan (OPG) biosynthesis. Necessary for the succinyl substitution of periplasmic glucans. Could catalyze the transfer of succinyl residues from the cytoplasmic side of the membrane to the nascent glucan backbones on the periplasmic side of the membrane. This is Glucans biosynthesis protein C from Escherichia coli (strain SMS-3-5 / SECEC).